The following is a 1105-amino-acid chain: Lysylphosphatidylglycerol biosynthesis bifunctional protein LysX (1105 aa).

Residues 1–603 (MTVTKPRSVQ…LLHHDGSAPD (603 aa)) form a phosphatidylglycerol lysyltransferase region. Helical transmembrane passes span 20–40 (VPAA…LASI), 62–82 (FPDT…ALAA), 86–106 (IAWL…AADI), 117–137 (FGEN…VLGY), 154–174 (AVLV…VELF), 186–203 (YVAN…DLFT), and 208–228 (VFLN…ATIV). The lysine--tRNA ligase stretch occupies residues 604–1105 (VSGLRQSAIA…TLPFPLAKPH (502 aa)). Mg(2+) contacts are provided by D1017 and E1024.

The protein in the N-terminal section; belongs to the LPG synthetase family. This sequence in the C-terminal section; belongs to the class-II aminoacyl-tRNA synthetase family. Requires Mg(2+) as cofactor.

The protein localises to the cell membrane. It carries out the reaction tRNA(Lys) + L-lysine + ATP = L-lysyl-tRNA(Lys) + AMP + diphosphate. It catalyses the reaction L-lysyl-tRNA(Lys) + a 1,2-diacyl-sn-glycero-3-phospho-(1'-sn-glycerol) = a 1,2-diacyl-sn-glycero-3-phospho-1'-(3'-O-L-lysyl)-sn-glycerol + tRNA(Lys). Its function is as follows. Catalyzes the production of L-lysyl-tRNA(Lys)transfer and the transfer of a lysyl group from L-lysyl-tRNA(Lys) to membrane-bound phosphatidylglycerol (PG), which produces lysylphosphatidylglycerol (LPG), one of the components of the bacterial membrane with a positive net charge. LPG synthesis contributes to the resistance to cationic antimicrobial peptides (CAMPs) and likely protects M.tuberculosis against the CAMPs produced by competiting microorganisms (bacteriocins). In fact, the modification of anionic phosphatidylglycerol with positively charged L-lysine results in repulsion of the peptides. The polypeptide is Lysylphosphatidylglycerol biosynthesis bifunctional protein LysX (lysX) (Mycobacterium marinum (strain ATCC BAA-535 / M)).